The following is a 455-amino-acid chain: uncharacterized protein (455 aa).

The next 11 helical transmembrane spans lie at 26-46, 53-73, 77-97, 111-131, 146-166, 191-211, 232-252, 256-276, 278-298, 323-343, and 357-377; these read FGPGVVALGIIAAVTLLQLLI, GAWGAIASMWLGVHLVPISIG, LGVMPLLPVLLMVWATARSTA, WVVASALGGPLLMAAIALAVI, ALRAFTSVLVVHSVGAATGVW, AAGVLALLGLSGVVTAGSLVV, LTVLSVLYAPNVIVGTSAIAV, AHIGFATFSSFAVLGGDIPAL, ILAAAPTPPLGPAWVALLIVG, LLVAAVAGALVMAVLGYGGGG, and ALVLGVLFWFTFVGWVTVVIA. A disordered region spans residues 384–455; the sequence is PKRLRPAPPV…LSDEPPPRAD (72 aa).

The protein localises to the cell membrane. This is an uncharacterized protein from Mycobacterium tuberculosis (strain CDC 1551 / Oshkosh).